Here is a 388-residue protein sequence, read N- to C-terminus: Probable peptidoglycan glycosyltransferase FtsW (388 aa).

Residues 1–19 (MSAAAPKPRPAHRFHIDQT) lie on the Cytoplasmic side of the membrane. Residues 20–40 (LLSVCLCLLGIGFVMVASSSM) traverse the membrane as a helical segment. Residues 41-57 (HLGVKMADDVSYYPFKQ) are Periplasmic-facing. A helical transmembrane segment spans residues 58 to 78 (LVHIILGLMFAAAILAIPMKY). The Cytoplasmic segment spans residues 79-85 (WQKIGQP). Residues 86 to 106 (LFIVGLVLLLVVLIPGVGVKV) traverse the membrane as a helical segment. Over 107 to 117 (NGSTRWLSLLG) the chain is Periplasmic. Residues 118–137 (LRIQVSEVMKFISVVYMAGY) traverse the membrane as a helical segment. Residues 138–147 (ITRHSDHVRH) are Cytoplasmic-facing. A helical transmembrane segment spans residues 148–168 (SIFGLLRPLMLLSVASILLLL). The Periplasmic portion of the chain corresponds to 169–170 (EP). Residues 171–191 (DFGSAVVILIIAMGMMFLGGA) form a helical membrane-spanning segment. R192 is a topological domain (cytoplasmic). Residues 193 to 213 (LSPFVALVALISSAGAILASS) traverse the membrane as a helical segment. Over 214–271 (ADYRVKRMTSFLNPWEHARDSGYQLTQALISFGRGEVSGVGLGNGLQKLFYLPEAHTD) the chain is Periplasmic. A helical membrane pass occupies residues 272–292 (FLFSVLGEELGLVGVTLVIAL). Residues 293–315 (FTTLVVRGFSIGEQAEAAGERFS) lie on the Cytoplasmic side of the membrane. Residues 316–336 (ALVAYGLVIWFGFQAFVNMGV) traverse the membrane as a helical segment. At 337-348 (NMGILPTKGLTL) the chain is on the periplasmic side. Residues 349–369 (PLMSYGGGSMIVMCGAMAVLF) traverse the membrane as a helical segment. The Cytoplasmic portion of the chain corresponds to 370–388 (RIHYEVTELHKSNIKGKSR).

This sequence belongs to the SEDS family. FtsW subfamily.

It is found in the cell inner membrane. It carries out the reaction [GlcNAc-(1-&gt;4)-Mur2Ac(oyl-L-Ala-gamma-D-Glu-L-Lys-D-Ala-D-Ala)](n)-di-trans,octa-cis-undecaprenyl diphosphate + beta-D-GlcNAc-(1-&gt;4)-Mur2Ac(oyl-L-Ala-gamma-D-Glu-L-Lys-D-Ala-D-Ala)-di-trans,octa-cis-undecaprenyl diphosphate = [GlcNAc-(1-&gt;4)-Mur2Ac(oyl-L-Ala-gamma-D-Glu-L-Lys-D-Ala-D-Ala)](n+1)-di-trans,octa-cis-undecaprenyl diphosphate + di-trans,octa-cis-undecaprenyl diphosphate + H(+). Its pathway is cell wall biogenesis; peptidoglycan biosynthesis. Functionally, peptidoglycan polymerase that is essential for cell division. The sequence is that of Probable peptidoglycan glycosyltransferase FtsW from Methylomonas methanica (strain DSM 25384 / MC09).